A 650-amino-acid chain; its full sequence is Probable LIM domain-containing serine/threonine-protein kinase DDB_G0287001 (650 aa).

2 LIM zinc-binding domains span residues 4-63 (NNCG…KLNA) and 64-122 (RKCF…PSDK). Disordered regions lie at residues 118–138 (KPSD…LPGK), 171–197 (LSSS…SSFM), and 293–320 (LLNS…NLNT). Gly residues predominate over residues 173 to 188 (SSGGSGNSISGSGGTN). Positions 386-643 (VAFGDVIASG…DTLKKISESL (258 aa)) constitute a Protein kinase domain. ATP is bound by residues 392–400 (IASGASGKV) and Lys413. Residue Asp509 is the Proton acceptor of the active site.

The protein belongs to the protein kinase superfamily. TKL Ser/Thr protein kinase family.

The enzyme catalyses L-seryl-[protein] + ATP = O-phospho-L-seryl-[protein] + ADP + H(+). It carries out the reaction L-threonyl-[protein] + ATP = O-phospho-L-threonyl-[protein] + ADP + H(+). This chain is Probable LIM domain-containing serine/threonine-protein kinase DDB_G0287001, found in Dictyostelium discoideum (Social amoeba).